The sequence spans 159 residues: Protein Smg homolog (159 aa).

It belongs to the Smg family.

The polypeptide is Protein Smg homolog (Vibrio campbellii (strain ATCC BAA-1116)).